The following is a 97-amino-acid chain: Citrate lyase acyl carrier protein (97 aa).

An O-(phosphoribosyl dephospho-coenzyme A)serine modification is found at Ser14.

The protein belongs to the CitD family. As to quaternary structure, oligomer with a subunit composition of (alpha,beta,gamma)6.

It localises to the cytoplasm. Functionally, covalent carrier of the coenzyme of citrate lyase. This chain is Citrate lyase acyl carrier protein, found in Lactobacillus helveticus (strain DPC 4571).